A 407-amino-acid chain; its full sequence is Tryptophan synthase beta chain (407 aa).

Lys91 carries the post-translational modification N6-(pyridoxal phosphate)lysine.

This sequence belongs to the TrpB family. In terms of assembly, tetramer of two alpha and two beta chains. Pyridoxal 5'-phosphate is required as a cofactor.

It carries out the reaction (1S,2R)-1-C-(indol-3-yl)glycerol 3-phosphate + L-serine = D-glyceraldehyde 3-phosphate + L-tryptophan + H2O. It participates in amino-acid biosynthesis; L-tryptophan biosynthesis; L-tryptophan from chorismate: step 5/5. Functionally, the beta subunit is responsible for the synthesis of L-tryptophan from indole and L-serine. In Streptococcus pneumoniae (strain P1031), this protein is Tryptophan synthase beta chain.